The chain runs to 319 residues: Pectinesterase (319 aa).

Gln-1 carries the pyrrolidone carboxylic acid modification. Positions 83 and 113 each coordinate substrate. The active-site Proton donor is Asp-136. Cysteines 150 and 170 form a disulfide. The Nucleophile role is filled by Asp-157. Substrate contacts are provided by Arg-225 and Trp-227.

The protein belongs to the pectinesterase family.

It is found in the secreted. The protein resides in the cell wall. The enzyme catalyses [(1-&gt;4)-alpha-D-galacturonosyl methyl ester](n) + n H2O = [(1-&gt;4)-alpha-D-galacturonosyl](n) + n methanol + n H(+). It functions in the pathway glycan metabolism; pectin degradation; 2-dehydro-3-deoxy-D-gluconate from pectin: step 1/5. In terms of biological role, catalyzes the deesterification of methyl-esterified D-galactosiduronic acid units in pectic compounds. It participates in modulating cell wall during fruit ripening, cell wall extension during pollen germination, and in defense mechanisms against pathogens. This is Pectinesterase from Daucus carota (Wild carrot).